A 485-amino-acid polypeptide reads, in one-letter code: Adenosylhomocysteinase (485 aa).

Substrate contacts are provided by T60, D146, and E208. Position 209-211 (209-211 (TTT)) interacts with NAD(+). Residues K238 and D242 each coordinate substrate. Residues N243, 272-277 (GYGDVG), E295, N330, 351-353 (IGH), and N399 each bind NAD(+).

Belongs to the adenosylhomocysteinase family. NAD(+) is required as a cofactor.

The protein resides in the cytoplasm. The enzyme catalyses S-adenosyl-L-homocysteine + H2O = L-homocysteine + adenosine. It functions in the pathway amino-acid biosynthesis; L-homocysteine biosynthesis; L-homocysteine from S-adenosyl-L-homocysteine: step 1/1. May play a key role in the regulation of the intracellular concentration of adenosylhomocysteine. This chain is Adenosylhomocysteinase, found in Streptomyces coelicolor (strain ATCC BAA-471 / A3(2) / M145).